Here is a 64-residue protein sequence, read N- to C-terminus: Small ribosomal subunit protein bS21 (64 aa).

This sequence belongs to the bacterial ribosomal protein bS21 family.

The protein is Small ribosomal subunit protein bS21 of Sulfurihydrogenibium sp. (strain YO3AOP1).